The primary structure comprises 297 residues: Cell division protein ZipA (297 aa).

Residue M1 is a topological domain, periplasmic. The chain crosses the membrane as a helical span at residues 2–22 (EIGLREWLILIGIIVIAGILF). The Cytoplasmic segment spans residues 23–297 (DGWRRMRGGK…FERRALTQKR (275 aa)). Residues 48–151 (DEEGGSAEVL…AAPASNSVKE (104 aa)) are disordered. Positions 83–92 (ARDREREPKP) are enriched in basic and acidic residues. Residues 124-133 (LFSDSDDDFA) are compositionally biased toward acidic residues.

It belongs to the ZipA family. Interacts with FtsZ via their C-terminal domains.

The protein resides in the cell inner membrane. Its function is as follows. Essential cell division protein that stabilizes the FtsZ protofilaments by cross-linking them and that serves as a cytoplasmic membrane anchor for the Z ring. Also required for the recruitment to the septal ring of downstream cell division proteins. This Pseudomonas putida (strain ATCC 47054 / DSM 6125 / CFBP 8728 / NCIMB 11950 / KT2440) protein is Cell division protein ZipA.